The sequence spans 346 residues: Phosphoribosylformylglycinamidine cyclo-ligase (346 aa).

This sequence belongs to the AIR synthase family.

The protein resides in the cytoplasm. It carries out the reaction 2-formamido-N(1)-(5-O-phospho-beta-D-ribosyl)acetamidine + ATP = 5-amino-1-(5-phospho-beta-D-ribosyl)imidazole + ADP + phosphate + H(+). Its pathway is purine metabolism; IMP biosynthesis via de novo pathway; 5-amino-1-(5-phospho-D-ribosyl)imidazole from N(2)-formyl-N(1)-(5-phospho-D-ribosyl)glycinamide: step 2/2. This Polaromonas sp. (strain JS666 / ATCC BAA-500) protein is Phosphoribosylformylglycinamidine cyclo-ligase.